The chain runs to 218 residues: Thiopurine S-methyltransferase (218 aa).

Residues Trp-10, Leu-45, Glu-66, and Arg-123 each contribute to the S-adenosyl-L-methionine site.

This sequence belongs to the class I-like SAM-binding methyltransferase superfamily. TPMT family.

It is found in the cytoplasm. It catalyses the reaction S-adenosyl-L-methionine + a thiopurine = S-adenosyl-L-homocysteine + a thiopurine S-methylether.. The protein is Thiopurine S-methyltransferase of Shewanella baltica (strain OS195).